A 643-amino-acid chain; its full sequence is Pseudouridylate synthase PUS7L (643 aa).

D284 (nucleophile) is an active-site residue. The 228-residue stretch at 370-597 folds into the TRUD domain; that stretch reads GFVNYYGPQR…PGCYRPLLAK (228 aa).

Belongs to the pseudouridine synthase TruD family.

It carries out the reaction a uridine in mRNA = a pseudouridine in mRNA. Functionally, pseudouridine synthase that catalyzes pseudouridylation of mRNAs. The protein is Pseudouridylate synthase PUS7L (pus7l) of Danio rerio (Zebrafish).